Reading from the N-terminus, the 385-residue chain is Putative 8-amino-7-oxononanoate synthase (385 aa).

Arg-21 contributes to the substrate binding site. Residue 108–109 participates in pyridoxal 5'-phosphate binding; it reads GY. His-133 is a binding site for substrate. Residues Ser-182, 207 to 210, and 234 to 237 contribute to the pyridoxal 5'-phosphate site; these read DEAH and TFGK. Lys-237 carries the N6-(pyridoxal phosphate)lysine modification. Ser-351 contributes to the substrate binding site.

This sequence belongs to the class-II pyridoxal-phosphate-dependent aminotransferase family. BioF subfamily. As to quaternary structure, homodimer. Pyridoxal 5'-phosphate is required as a cofactor.

It carries out the reaction 6-carboxyhexanoyl-[ACP] + L-alanine + H(+) = (8S)-8-amino-7-oxononanoate + holo-[ACP] + CO2. Its pathway is cofactor biosynthesis; biotin biosynthesis. In terms of biological role, catalyzes the decarboxylative condensation of pimeloyl-[acyl-carrier protein] and L-alanine to produce 8-amino-7-oxononanoate (AON), [acyl-carrier protein], and carbon dioxide. This is Putative 8-amino-7-oxononanoate synthase (bioF) from Desulfosudis oleivorans (strain DSM 6200 / JCM 39069 / Hxd3) (Desulfococcus oleovorans).